Reading from the N-terminus, the 299-residue chain is 5-azacytidine resistance protein azr1 (299 aa).

Residues 35-293 (KSHFPSPATL…DDTTITCLLI (259 aa)) form the PPM-type phosphatase domain.

Confers azacytidine resistance in high copy. The sequence is that of 5-azacytidine resistance protein azr1 (azr1) from Schizosaccharomyces pombe (strain 972 / ATCC 24843) (Fission yeast).